The following is a 207-amino-acid chain: Large ribosomal subunit protein uL4 (207 aa).

Residues 48–70 form a disordered region; sequence KAQKTRSEVSGGGAKPWRQKGTG.

The protein belongs to the universal ribosomal protein uL4 family. In terms of assembly, part of the 50S ribosomal subunit.

In terms of biological role, one of the primary rRNA binding proteins, this protein initially binds near the 5'-end of the 23S rRNA. It is important during the early stages of 50S assembly. It makes multiple contacts with different domains of the 23S rRNA in the assembled 50S subunit and ribosome. Forms part of the polypeptide exit tunnel. This chain is Large ribosomal subunit protein uL4, found in Francisella philomiragia subsp. philomiragia (strain ATCC 25017 / CCUG 19701 / FSC 153 / O#319-036).